We begin with the raw amino-acid sequence, 777 residues long: Rho-GTPase-activating protein 8 (777 aa).

Residues 3–420 (SSFSNGFWSK…YQEIIQPESD (418 aa)) enclose the F-BAR domain. The stretch at 117-172 (QKLQTSQQVLTNQIKSYEKKYYTLKKTKSAYYNKCRNLEDYEEESKESNETTSEAI) forms a coiled coil. The DEP domain occupies 213–296 (VLQEIPLQDY…WKDKAFQFAG (84 aa)). Positions 454–650 (VDVEFLSHRD…DLLTYGPSIF (197 aa)) constitute a Rho-GAP domain. The disordered stretch occupies residues 667 to 709 (LYQSSATPRSTDVSPTRPDSISSVRSHTAVESPRSSFEELQPS). Over residues 668–692 (YQSSATPRSTDVSPTRPDSISSVRS) the composition is skewed to polar residues. Phosphoserine is present on residues serine 676 and serine 680. At threonine 682 the chain carries Phosphothreonine. Position 686 is a phosphoserine (serine 686). The residue at position 694 (threonine 694) is a Phosphothreonine. Serine 698 carries the phosphoserine modification.

In terms of assembly, interacts with pak1/shk1. Phosphorylated by pak1/shk1.

Its subcellular location is the cytoplasm. Its function is as follows. Acts in signal transduction. Negatively regulates the pak1/shk1 control pathway. In Schizosaccharomyces pombe (strain 972 / ATCC 24843) (Fission yeast), this protein is Rho-GTPase-activating protein 8 (rga8).